The following is a 219-amino-acid chain: MNLNNDHGPDPENILPIKGNRNLQFIKPTITNENILVGEYSYYDSKRGESFEDQVLYHYEVIGDKLIIGRFCSIGPGTTFIMNGANHRMDGSTYPFHLFRMGWEKYMPSLKDLPLKGDIEIGNDVWIGRDVTIMPGVKIGDGAIIAAEAVVTKNVAPYSIVGGNPLKFIRKRFSDGVIEEWLALQWWNLDMKIINENLPFIINGDIEMLKRKRKLLDDT.

H87 is a catalytic residue.

The protein belongs to the transferase hexapeptide repeat family.

In terms of biological role, inactivates the A compounds of virginiamycin-like antibiotics, thus providing resistance to these antibiotics. This chain is Virginiamycin A acetyltransferase (vat), found in Staphylococcus aureus.